Here is an 805-residue protein sequence, read N- to C-terminus: Mediator of RNA polymerase II transcription subunit 25 (805 aa).

2 disordered regions span residues 430-455 (GSAQ…GQTV) and 786-805 (SQSQ…GFMN). 2 stretches are compositionally biased toward low complexity: residues 438-451 (SAPS…PSMS) and 786-795 (SQSQGSSQGL).

Belongs to the Mediator complex subunit 25 family. As to quaternary structure, interacts with MYC2 (via N-terminus). MED25 competes with JAZ7 for binding to MYC2.

In terms of biological role, component of the Mediator complex, a coactivator involved in the regulated transcription of nearly all RNA polymerase II-dependent genes. Mediator functions as a bridge to convey information from gene-specific regulatory proteins to the basal RNA polymerase II transcription machinery. Mediator is recruited to promoters by direct interactions with regulatory proteins and serves as a scaffold for the assembly of a functional pre-initiation complex with RNA polymerase II and the general transcription factors. Plays a positive role in wound-induced activation of jasmonate-responsive genes whose promoters are targeted by MYC2. The protein is Mediator of RNA polymerase II transcription subunit 25 of Solanum lycopersicum (Tomato).